Consider the following 445-residue polypeptide: Guanosine nucleotide diphosphate dissociation inhibitor 1 (445 aa).

This sequence belongs to the Rab GDI family. Interacts with the GDP-bound form of RABA5C (via C-terminus). Expressed in roots, rosette leaves, stems, floral buds and siliques.

Functionally, regulates the GDP/GTP exchange reaction of most RAB proteins by inhibiting the dissociation of GDP from them, and the subsequent binding of GTP. The protein is Guanosine nucleotide diphosphate dissociation inhibitor 1 (GDI1) of Arabidopsis thaliana (Mouse-ear cress).